A 669-amino-acid polypeptide reads, in one-letter code: Epithelial sodium channel subunit gamma (669 aa).

Residues 1–67 lie on the Cytoplasmic side of the membrane; it reads MAPPYHGDTR…VVSRGRLRKF (67 aa). Residues 68 to 88 form a helical membrane-spanning segment; sequence IWILLTLSAVGLILWQCAELI. Residues 89-551 are Extracellular-facing; the sequence is MSYYTASVSV…VILLSNFGGQ (463 aa). 8 disulfide bridges follow: Cys-113–Cys-300, Cys-223–Cys-231, Cys-277–Cys-284, Cys-389–Cys-474, Cys-411–Cys-470, Cys-415–Cys-466, Cys-424–Cys-451, and Cys-426–Cys-440. Residues 552-572 form a helical membrane-spanning segment; it reads LGLWMSCSMVCVIEIIEVFFI. Residues 573–669 are Cytoplasmic-facing; sequence DSFSIVMRRR…LPDTLEGRSH (97 aa). Residues 592 to 619 form a disordered region; it reads DRKAPRPQEPPQVNAPAKEGHDNPVCTD.

This sequence belongs to the amiloride-sensitive sodium channel (TC 1.A.6) family. SCNN1G subfamily. Component of the heterotrimeric epithelial sodium channel (ENaC) composed of an alpha/SCNN1A, a beta/SCNN1B and a gamma/SCNN1G subunit.

It localises to the apical cell membrane. The enzyme catalyses Na(+)(in) = Na(+)(out). Originally identified and characterized by its inhibition by the diuretic drug amiloride. Its function is as follows. This is one of the three pore-forming subunits of the heterotrimeric epithelial sodium channel (ENaC), a critical regulator of sodium balance and fluid homeostasis. ENaC operates in epithelial tissues, where it mediates the electrodiffusion of sodium ions from extracellular fluid through the apical membrane of cells, with water following osmotically. This chain is Epithelial sodium channel subunit gamma, found in Pelodiscus sinensis (Chinese softshell turtle).